The following is a 468-amino-acid chain: Siroheme synthase (468 aa).

A precorrin-2 dehydrogenase /sirohydrochlorin ferrochelatase region spans residues 1 to 202 (MDYLPLFARL…EQHDSAEQWM (202 aa)). Residues 22 to 23 (DI) and 43 to 44 (PS) contribute to the NAD(+) site. Residue Ser-126 is modified to Phosphoserine. The interval 214 to 468 (GEIVLVGAGP…SGKEHLINLA (255 aa)) is uroporphyrinogen-III C-methyltransferase. Pro-223 is an S-adenosyl-L-methionine binding site. Asp-246 (proton acceptor) is an active-site residue. The active-site Proton donor is Lys-268. Residues 299–301 (GGD), 329–330 (TA), Met-381, and Gly-410 each bind S-adenosyl-L-methionine.

In the N-terminal section; belongs to the precorrin-2 dehydrogenase / sirohydrochlorin ferrochelatase family. The protein in the C-terminal section; belongs to the precorrin methyltransferase family.

It carries out the reaction uroporphyrinogen III + 2 S-adenosyl-L-methionine = precorrin-2 + 2 S-adenosyl-L-homocysteine + H(+). The enzyme catalyses precorrin-2 + NAD(+) = sirohydrochlorin + NADH + 2 H(+). The catalysed reaction is siroheme + 2 H(+) = sirohydrochlorin + Fe(2+). It participates in cofactor biosynthesis; adenosylcobalamin biosynthesis; precorrin-2 from uroporphyrinogen III: step 1/1. Its pathway is cofactor biosynthesis; adenosylcobalamin biosynthesis; sirohydrochlorin from precorrin-2: step 1/1. The protein operates within porphyrin-containing compound metabolism; siroheme biosynthesis; precorrin-2 from uroporphyrinogen III: step 1/1. It functions in the pathway porphyrin-containing compound metabolism; siroheme biosynthesis; siroheme from sirohydrochlorin: step 1/1. It participates in porphyrin-containing compound metabolism; siroheme biosynthesis; sirohydrochlorin from precorrin-2: step 1/1. In terms of biological role, multifunctional enzyme that catalyzes the SAM-dependent methylations of uroporphyrinogen III at position C-2 and C-7 to form precorrin-2 via precorrin-1. Then it catalyzes the NAD-dependent ring dehydrogenation of precorrin-2 to yield sirohydrochlorin. Finally, it catalyzes the ferrochelation of sirohydrochlorin to yield siroheme. The protein is Siroheme synthase of Tolumonas auensis (strain DSM 9187 / NBRC 110442 / TA 4).